Here is a 695-residue protein sequence, read N- to C-terminus: Probable serine/threonine-protein kinase DDB_G0279405 (695 aa).

Disordered stretches follow at residues 119–138 (IVAQPQPQPQPQPQPQPQPQ) and 149–192 (QIPT…KRHK). Positions 124–138 (QPQPQPQPQPQPQPQ) are enriched in pro residues. Residues 149 to 160 (QIPTTPPQQISQ) are compositionally biased toward low complexity. Positions 161-173 (FNITGNKSPSSIG) are enriched in polar residues. The Protein kinase domain maps to 201-462 (YVFVRKLGKG…IAEIKSHKWT (262 aa)). ATP-binding positions include 207–215 (LGKGTFGKV) and lysine 230. The active-site Proton acceptor is the aspartate 329. The interval 491–580 (TDHTIKPSDN…NQNQNNNNNS (90 aa)) is disordered. A compositionally biased stretch (low complexity) spans 510–528 (LSSSSGGESSGIIGSSNES). The segment covering 529-541 (KSMYNNVNSKQKI) has biased composition (polar residues). The segment covering 542 to 580 (QNQNQNQNQNQNQNQNQNQNQNHNQNQNQNQNQNNNNNS) has biased composition (low complexity).

The protein belongs to the protein kinase superfamily. Ser/Thr protein kinase family.

The enzyme catalyses L-seryl-[protein] + ATP = O-phospho-L-seryl-[protein] + ADP + H(+). The catalysed reaction is L-threonyl-[protein] + ATP = O-phospho-L-threonyl-[protein] + ADP + H(+). The chain is Probable serine/threonine-protein kinase DDB_G0279405 from Dictyostelium discoideum (Social amoeba).